Consider the following 361-residue polypeptide: Ataxin-3 (361 aa).

Residue Met-1 forms a Peptide (Met-Gly) (interchain with G-Cter in ubiquitin) linkage. The 180-residue stretch at 1–180 (MESIFHEKQE…DCEADQLLQM (180 aa)) folds into the Josephin domain. Cys-14 (nucleophile) is an active-site residue. His-119 acts as the Proton acceptor in catalysis. Asn-134 is a catalytic residue. A Glycyl lysine isopeptide (Lys-Gly) (interchain with G-Cter in ubiquitin) cross-link involves residue Lys-200. Ser-219 carries the post-translational modification Phosphoserine. 2 UIM domains span residues 224–243 (EDEE…IDME) and 244–263 (DEEA…SSRN). The span at 258-278 (QGSSRNISQDMTQTSGTNLTS) shows a compositional bias: polar residues. The segment at 258–338 (QGSSRNISQD…DLGDAMSEED (81 aa)) is disordered. Residues Ser-265 and Ser-272 each carry the phosphoserine modification. Over residues 279–293 (EELRKRREAYFEKQQ) the composition is skewed to basic and acidic residues. Residues 294-305 (QKQQQQQQQQQQ) are compositionally biased toward low complexity. Polar residues predominate over residues 306-325 (GDLSGQSSHPCERPATSSGA). A Phosphoserine modification is found at Ser-328. A UIM 3 domain is found at 331–349 (GDAMSEEDMLQAAVTMSLE).

As to quaternary structure, interacts with STUB1/CHIP (when monoubiquitinated). Interacts with DNA repair proteins RAD23A and RAD23B. Interacts with BECN1 (via its poly-Gln domain). Interacts with PRKN, UBR2, VCP and tubulin. Short isoform 1 interacts with CASP7. Post-translationally, monoubiquitinated N-terminally by UBE2W, possibly leading to activate the deubiquitinating enzyme activity. As to expression, ubiquitous.

The protein localises to the nucleus matrix. Its subcellular location is the nucleus. It localises to the lysosome membrane. It carries out the reaction Thiol-dependent hydrolysis of ester, thioester, amide, peptide and isopeptide bonds formed by the C-terminal Gly of ubiquitin (a 76-residue protein attached to proteins as an intracellular targeting signal).. Functionally, deubiquitinating enzyme involved in protein homeostasis maintenance, transcription, cytoskeleton regulation, myogenesis and degradation of misfolded chaperone substrates. Binds long polyubiquitin chains and trims them, while it has weak or no activity against chains of 4 or less ubiquitins. Involved in degradation of misfolded chaperone substrates via its interaction with STUB1/CHIP: recruited to monoubiquitinated STUB1/CHIP, and restricts the length of ubiquitin chain attached to STUB1/CHIP substrates and preventing further chain extension. Interacts with key regulators of transcription and represses transcription: acts as a histone-binding protein that regulates transcription. Acts as a negative regulator of mTORC1 signaling in response to amino acid deprivation by mediating deubiquitination of RHEB, thereby promoting RHEB inactivation by the TSC-TBC complex. Regulates autophagy via the deubiquitination of 'Lys-402' of BECN1 leading to the stabilization of BECN1. This chain is Ataxin-3, found in Homo sapiens (Human).